Consider the following 362-residue polypeptide: 3-dehydroquinate synthase (362 aa).

Residues 70–75 (DGEQYK), 104–108 (GVIGD), 128–129 (TT), lysine 141, and lysine 150 each bind NAD(+). Residues glutamate 183, histidine 246, and histidine 263 each contribute to the Zn(2+) site.

This sequence belongs to the sugar phosphate cyclases superfamily. Dehydroquinate synthase family. It depends on NAD(+) as a cofactor. The cofactor is Co(2+). Zn(2+) is required as a cofactor.

It localises to the cytoplasm. It catalyses the reaction 7-phospho-2-dehydro-3-deoxy-D-arabino-heptonate = 3-dehydroquinate + phosphate. It participates in metabolic intermediate biosynthesis; chorismate biosynthesis; chorismate from D-erythrose 4-phosphate and phosphoenolpyruvate: step 2/7. Catalyzes the conversion of 3-deoxy-D-arabino-heptulosonate 7-phosphate (DAHP) to dehydroquinate (DHQ). This Pasteurella multocida (strain Pm70) protein is 3-dehydroquinate synthase.